The following is a 254-amino-acid chain: Alcohol dehydrogenase (254 aa).

10 to 33 contacts NAD(+); that stretch reads FVAGLGGIGLDTSREIVKSGPKNL. Ser138 contacts substrate. The active-site Proton acceptor is Tyr151.

It belongs to the short-chain dehydrogenases/reductases (SDR) family. Homodimer.

It carries out the reaction a primary alcohol + NAD(+) = an aldehyde + NADH + H(+). The catalysed reaction is a secondary alcohol + NAD(+) = a ketone + NADH + H(+). The chain is Alcohol dehydrogenase (Adh) from Drosophila differens (Fruit fly).